The following is a 351-amino-acid chain: Trans-enoyl reductase grgB (351 aa).

Residues 10–346 (GAESGGYRLA…GKVHAKKLVV (337 aa)) enclose the Enoyl reductase (ER) domain. NADP(+) contacts are provided by residues 161–164 (ATAT), 184–187 (SPAN), Y202, 249–250 (LE), and 339–340 (VH).

The protein belongs to the zinc-containing alcohol dehydrogenase family.

It participates in secondary metabolite biosynthesis. Its function is as follows. Trans-enoyl reductase; part of the gene cluster that mediates the biosynthesis of gregatin A, a fungal polyketide featuring an alkylated furanone core. The PKS grgA synthesizes C11 and C4 polyketide chains in the presence and absence of the trans-enoyl reductase grgB, respectively. The polyketide transferase grgF is then responsible for the fusion of the two carbon chains to produce the furanone skeleton of gregatin A. Next, the cytochrome P450 monooxygenase grgG accepts performs the oxidative cyclization to furnish the gregatin scaffold and leads to the formation of desmethylgregatin A. Finally, the O-methyltransferase grgD methylates the carboxyl group of desmethylgregatin A to provide gregatin A. In Penicillium sp, this protein is Trans-enoyl reductase grgB.